The sequence spans 399 residues: DJ-1 protein homolog F (399 aa).

PfpI endopeptidase domains lie at 7–199 (KSVL…ESLG) and 211–394 (TSLL…TALG).

The protein belongs to the peptidase C56 family. Homotrimer.

Its function is as follows. May be involved in oxidative stress response. The chain is DJ-1 protein homolog F (DJ1F) from Arabidopsis thaliana (Mouse-ear cress).